A 142-amino-acid chain; its full sequence is Large ribosomal subunit protein uL13 (142 aa).

The protein belongs to the universal ribosomal protein uL13 family. Part of the 50S ribosomal subunit.

Functionally, this protein is one of the early assembly proteins of the 50S ribosomal subunit, although it is not seen to bind rRNA by itself. It is important during the early stages of 50S assembly. The protein is Large ribosomal subunit protein uL13 of Salmonella agona (strain SL483).